The sequence spans 302 residues: Large ribosomal subunit protein uL4m (302 aa).

This sequence belongs to the universal ribosomal protein uL4 family. In terms of assembly, component of the mitochondrial ribosome large subunit (39S) which comprises a 16S rRNA and about 50 distinct proteins.

It is found in the mitochondrion. This chain is Large ribosomal subunit protein uL4m (mrpl4), found in Danio rerio (Zebrafish).